A 108-amino-acid chain; its full sequence is Translation initiation factor 1A (108 aa).

The 75-residue stretch at 11–85 (PSRDVPRPEE…NRCDILYKYG (75 aa)) folds into the S1-like domain.

Belongs to the eIF-1A family.

Seems to be required for maximal rate of protein biosynthesis. Enhances ribosome dissociation into subunits and stabilizes the binding of the initiator Met-tRNA(I) to 40 S ribosomal subunits. This Saccharolobus solfataricus (strain ATCC 35092 / DSM 1617 / JCM 11322 / P2) (Sulfolobus solfataricus) protein is Translation initiation factor 1A (eIF1A).